A 372-amino-acid chain; its full sequence is Cyanuric acid amidohydrolase (372 aa).

The RU A stretch occupies residues 1–105 (MPTTLRRAHV…IVFEAREVDE (105 aa)). Residues arginine 56 and 84-85 (SG) contribute to the substrate site. Residues 115–252 (SLALGRARTP…HEIMVAGMSR (138 aa)) form an RU B region. The active site involves lysine 165. Substrate-binding positions include arginine 197 and 235-236 (SG). The active-site Nucleophile is the serine 235. Residues 258 to 372 (LAIDHGVMRD…GPVAIIVERT (115 aa)) form an RU C region. Position 305 (glutamate 305) interacts with Mg(2+). Substrate is bound by residues arginine 332 and 351–352 (SG). Residues alanine 354, glutamine 357, glycine 358, proline 359, and glycine 362 each contribute to the Mg(2+) site.

This sequence belongs to the cyclic amide hydrolase (CyAH) family. In terms of assembly, homotetramer.

It catalyses the reaction cyanurate + H2O = 1-carboxybiuret + H(+). It functions in the pathway xenobiotic degradation; atrazine degradation; biuret from cyanurate: step 1/1. Its activity is regulated as follows. Inhibited by barbituric acid. Functionally, responsible for the hydrolysis of cyanuric acid, an intermediate formed during catabolism of s-triazine based compounds in herbicides such as atrazine and polymers such as melamine. Catalyzes the hydrolytic opening of the s-triazine ring of cyanuric acid (2,4,6-trihydroxy-s-triazine) to yield carbon dioxide and carboxybiuret, which spontaneously decarboxylates to biuret. This is Cyanuric acid amidohydrolase from Bradyrhizobium sp. (strain ORS 375).